Consider the following 144-residue polypeptide: Large ribosomal subunit protein uL16 (144 aa).

Belongs to the universal ribosomal protein uL16 family. As to quaternary structure, part of the 50S ribosomal subunit.

Its function is as follows. Binds 23S rRNA and is also seen to make contacts with the A and possibly P site tRNAs. In Pediococcus pentosaceus (strain ATCC 25745 / CCUG 21536 / LMG 10740 / 183-1w), this protein is Large ribosomal subunit protein uL16.